Consider the following 133-residue polypeptide: ATP synthase epsilon chain, chloroplastic (133 aa).

Belongs to the ATPase epsilon chain family. F-type ATPases have 2 components, CF(1) - the catalytic core - and CF(0) - the membrane proton channel. CF(1) has five subunits: alpha(3), beta(3), gamma(1), delta(1), epsilon(1). CF(0) has three main subunits: a, b and c.

It is found in the plastid. It localises to the chloroplast thylakoid membrane. Functionally, produces ATP from ADP in the presence of a proton gradient across the membrane. This Zygnema circumcarinatum (Green alga) protein is ATP synthase epsilon chain, chloroplastic.